The primary structure comprises 314 residues: tRNA dimethylallyltransferase (314 aa).

9–16 (GPTAVGKT) lines the ATP pocket. Residue 11-16 (TAVGKT) coordinates substrate. The interval 34 to 37 (DSVQ) is interaction with substrate tRNA.

The protein belongs to the IPP transferase family. In terms of assembly, monomer. Requires Mg(2+) as cofactor.

The catalysed reaction is adenosine(37) in tRNA + dimethylallyl diphosphate = N(6)-dimethylallyladenosine(37) in tRNA + diphosphate. Its function is as follows. Catalyzes the transfer of a dimethylallyl group onto the adenine at position 37 in tRNAs that read codons beginning with uridine, leading to the formation of N6-(dimethylallyl)adenosine (i(6)A). The protein is tRNA dimethylallyltransferase of Desulfitobacterium hafniense (strain Y51).